Reading from the N-terminus, the 217-residue chain is Kunitz-type trypsin inhibitor-like 1 protein (217 aa).

Residues 1–26 (MKPLSPLTLSFFLFVFITNLSLAFSN) form the signal peptide. 2 disulfide bridges follow: Cys-70–Cys-115 and Cys-168–Cys-175. Residue Asn-191 is glycosylated (N-linked (GlcNAc...) asparagine).

This sequence belongs to the protease inhibitor I3 (leguminous Kunitz-type inhibitor) family. Expressed in roots, leaves, epidermal layers of elongating stems, meristems and in the vascular system.

It localises to the secreted. Might act as a protease inhibitor involved in plant defense responses. The protein is Kunitz-type trypsin inhibitor-like 1 protein (PIP20-1) of Pisum sativum (Garden pea).